Here is a 326-residue protein sequence, read N- to C-terminus: Glyoxylate/hydroxypyruvate reductase B (326 aa).

Residues Arg-237 and Glu-266 contribute to the active site. His-285 acts as the Proton donor in catalysis.

Belongs to the D-isomer specific 2-hydroxyacid dehydrogenase family. GhrB subfamily. As to quaternary structure, homodimer.

The protein resides in the cytoplasm. It carries out the reaction glycolate + NADP(+) = glyoxylate + NADPH + H(+). The enzyme catalyses (R)-glycerate + NAD(+) = 3-hydroxypyruvate + NADH + H(+). The catalysed reaction is (R)-glycerate + NADP(+) = 3-hydroxypyruvate + NADPH + H(+). Its function is as follows. Catalyzes the NADPH-dependent reduction of glyoxylate and hydroxypyruvate into glycolate and glycerate, respectively. This is Glyoxylate/hydroxypyruvate reductase B from Yersinia pestis bv. Antiqua (strain Nepal516).